The chain runs to 284 residues: Pantothenate synthetase (284 aa).

Methionine 30–histidine 37 lines the ATP pocket. Histidine 37 serves as the catalytic Proton donor. Glutamine 61 provides a ligand contact to (R)-pantoate. Glutamine 61 is a binding site for beta-alanine. Glycine 149–aspartate 152 is an ATP binding site. Glutamine 155 is a binding site for (R)-pantoate. Residues valine 178 and leucine 186–arginine 189 contribute to the ATP site.

The protein belongs to the pantothenate synthetase family. As to quaternary structure, homodimer.

Its subcellular location is the cytoplasm. It carries out the reaction (R)-pantoate + beta-alanine + ATP = (R)-pantothenate + AMP + diphosphate + H(+). The protein operates within cofactor biosynthesis; (R)-pantothenate biosynthesis; (R)-pantothenate from (R)-pantoate and beta-alanine: step 1/1. In terms of biological role, catalyzes the condensation of pantoate with beta-alanine in an ATP-dependent reaction via a pantoyl-adenylate intermediate. The polypeptide is Pantothenate synthetase (Yersinia enterocolitica serotype O:8 / biotype 1B (strain NCTC 13174 / 8081)).